Consider the following 109-residue polypeptide: U-scoloptoxin(16)-Cw1a (109 aa).

The N-terminal stretch at 1–21 (MNAVFIVFLSAILSYPHESFA) is a signal peptide.

This sequence belongs to the scoloptoxin-16 family. Contains 4 disulfide bonds. Expressed by the venom gland.

Its subcellular location is the secreted. The sequence is that of U-scoloptoxin(16)-Cw1a from Cormocephalus westwoodi (Westwood's green centipede).